A 251-amino-acid chain; its full sequence is Small ribosomal subunit protein uS2 (251 aa).

Residues 232 to 251 (EAIAEMDEQVEEDAEEASND) are disordered.

It belongs to the universal ribosomal protein uS2 family.

This chain is Small ribosomal subunit protein uS2, found in Chlorobaculum parvum (strain DSM 263 / NCIMB 8327) (Chlorobium vibrioforme subsp. thiosulfatophilum).